The sequence spans 117 residues: Immunoglobulin kappa variable 1D-43 (117 aa).

A signal peptide spans 1-22 (MDMRVPAQRLGLLLLWFPGARC). Residues 23–45 (AIRMTQSPFSLSASVGDRVTITC) form a framework-1 region. One can recognise an Ig-like domain in the interval 23 to 117 (AIRMTQSPFS…YYCQQYYSTP (95 aa)). A disulfide bridge links cysteine 45 with cysteine 110. A complementarity-determining-1 region spans residues 46-56 (WASQGISSYLA). Positions 57 to 71 (WYQQKPAKAPKLFIY) are framework-2. Positions 72–78 (YASSLQS) are complementarity-determining-2. A framework-3 region spans residues 79–110 (GVPSRFSGSGSGTDYTLTISSLQPEDFATYYC). A complementarity-determining-3 region spans residues 111–117 (QQYYSTP).

In terms of assembly, immunoglobulins are composed of two identical heavy chains and two identical light chains; disulfide-linked.

Its subcellular location is the secreted. The protein resides in the cell membrane. Functionally, v region of the variable domain of immunoglobulin light chains that participates in the antigen recognition. Immunoglobulins, also known as antibodies, are membrane-bound or secreted glycoproteins produced by B lymphocytes. In the recognition phase of humoral immunity, the membrane-bound immunoglobulins serve as receptors which, upon binding of a specific antigen, trigger the clonal expansion and differentiation of B lymphocytes into immunoglobulins-secreting plasma cells. Secreted immunoglobulins mediate the effector phase of humoral immunity, which results in the elimination of bound antigens. The antigen binding site is formed by the variable domain of one heavy chain, together with that of its associated light chain. Thus, each immunoglobulin has two antigen binding sites with remarkable affinity for a particular antigen. The variable domains are assembled by a process called V-(D)-J rearrangement and can then be subjected to somatic hypermutations which, after exposure to antigen and selection, allow affinity maturation for a particular antigen. The protein is Immunoglobulin kappa variable 1D-43 of Homo sapiens (Human).